A 125-amino-acid polypeptide reads, in one-letter code: Large ribosomal subunit protein bL21 (125 aa).

Basic residues predominate over residues 75–89; sequence FKKRRRQNSKRKRGH. Disordered regions lie at residues 75–94 and 103–125; these read FKKRRRQNSKRKRGHRQDLT and AGGASPAAAAASSETPAASAPEA. Positions 106–125 are enriched in low complexity; sequence ASPAAAAASSETPAASAPEA.

This sequence belongs to the bacterial ribosomal protein bL21 family. In terms of assembly, part of the 50S ribosomal subunit. Contacts protein L20.

Its function is as follows. This protein binds to 23S rRNA in the presence of protein L20. This chain is Large ribosomal subunit protein bL21, found in Methylocella silvestris (strain DSM 15510 / CIP 108128 / LMG 27833 / NCIMB 13906 / BL2).